Reading from the N-terminus, the 704-residue chain is Elongation factor G (704 aa).

A tr-type G domain is found at 8–290 (ARYRNIGISA…AVVDYLPSPV (283 aa)). GTP contacts are provided by residues 17-24 (AHIDAGKT), 88-92 (DTPGH), and 142-145 (NKMD).

Belongs to the TRAFAC class translation factor GTPase superfamily. Classic translation factor GTPase family. EF-G/EF-2 subfamily.

It localises to the cytoplasm. Functionally, catalyzes the GTP-dependent ribosomal translocation step during translation elongation. During this step, the ribosome changes from the pre-translocational (PRE) to the post-translocational (POST) state as the newly formed A-site-bound peptidyl-tRNA and P-site-bound deacylated tRNA move to the P and E sites, respectively. Catalyzes the coordinated movement of the two tRNA molecules, the mRNA and conformational changes in the ribosome. This Pectobacterium carotovorum subsp. carotovorum (strain PC1) protein is Elongation factor G.